We begin with the raw amino-acid sequence, 411 residues long: Putative acid phosphatase 10 (411 aa).

Residue histidine 33 is the Nucleophile of the active site. The active-site Proton donor is aspartate 313. Cysteine 379 and cysteine 385 are disulfide-bonded.

It belongs to the histidine acid phosphatase family.

The enzyme catalyses a phosphate monoester + H2O = an alcohol + phosphate. This is Putative acid phosphatase 10 (pho-10) from Caenorhabditis elegans.